Reading from the N-terminus, the 569-residue chain is Probable protein phosphatase 2C BIPP2C1 (569 aa).

Disordered stretches follow at residues 120–214 (EVSP…KVTG) and 251–279 (SLDD…GSSI). Positions 179–188 (ESERGSDADG) are enriched in basic and acidic residues. One can recognise a PPM-type phosphatase domain in the interval 329–564 (AAMLPHPSKV…DDVTVVVSVV (236 aa)). Mn(2+)-binding residues include Asp358, Gly359, Asp488, and Asp555.

This sequence belongs to the PP2C family. Requires Mg(2+) as cofactor. Mn(2+) serves as cofactor.

It carries out the reaction O-phospho-L-seryl-[protein] + H2O = L-seryl-[protein] + phosphate. It catalyses the reaction O-phospho-L-threonyl-[protein] + H2O = L-threonyl-[protein] + phosphate. In terms of biological role, may play a role in responses to biotic and abiotic stresses. This Oryza sativa subsp. japonica (Rice) protein is Probable protein phosphatase 2C BIPP2C1 (BIPP2C1).